A 305-amino-acid polypeptide reads, in one-letter code: UDP-3-O-acyl-N-acetylglucosamine deacetylase (305 aa).

Residues His79, His238, and Asp242 each coordinate Zn(2+). The Proton donor role is filled by His265.

This sequence belongs to the LpxC family. Requires Zn(2+) as cofactor.

It catalyses the reaction a UDP-3-O-[(3R)-3-hydroxyacyl]-N-acetyl-alpha-D-glucosamine + H2O = a UDP-3-O-[(3R)-3-hydroxyacyl]-alpha-D-glucosamine + acetate. Its pathway is glycolipid biosynthesis; lipid IV(A) biosynthesis; lipid IV(A) from (3R)-3-hydroxytetradecanoyl-[acyl-carrier-protein] and UDP-N-acetyl-alpha-D-glucosamine: step 2/6. Catalyzes the hydrolysis of UDP-3-O-myristoyl-N-acetylglucosamine to form UDP-3-O-myristoylglucosamine and acetate, the committed step in lipid A biosynthesis. In Vibrio campbellii (strain ATCC BAA-1116), this protein is UDP-3-O-acyl-N-acetylglucosamine deacetylase.